Consider the following 327-residue polypeptide: DNA-directed RNA polymerase subunit alpha (327 aa).

The interval 1 to 231 (MIYQMQMPAK…DHVLLFADFS (231 aa)) is alpha N-terminal domain (alpha-NTD). The tract at residues 247-327 (DEFETMRRLL…GMDITRYQMK (81 aa)) is alpha C-terminal domain (alpha-CTD).

The protein belongs to the RNA polymerase alpha chain family. As to quaternary structure, homodimer. The RNAP catalytic core consists of 2 alpha, 1 beta, 1 beta' and 1 omega subunit. When a sigma factor is associated with the core the holoenzyme is formed, which can initiate transcription.

The catalysed reaction is RNA(n) + a ribonucleoside 5'-triphosphate = RNA(n+1) + diphosphate. DNA-dependent RNA polymerase catalyzes the transcription of DNA into RNA using the four ribonucleoside triphosphates as substrates. In Chlorobium chlorochromatii (strain CaD3), this protein is DNA-directed RNA polymerase subunit alpha.